Consider the following 635-residue polypeptide: Threonine--tRNA ligase (635 aa).

A TGS domain is found at 1–61 (MIAITLPDGS…DRDVALAIIT (61 aa)). A catalytic region spans residues 242–533 (DHRKLGKSLD…LLENHAGALP (292 aa)). Cys333, His384, and His510 together coordinate Zn(2+).

Belongs to the class-II aminoacyl-tRNA synthetase family. As to quaternary structure, homodimer. It depends on Zn(2+) as a cofactor.

The protein localises to the cytoplasm. The enzyme catalyses tRNA(Thr) + L-threonine + ATP = L-threonyl-tRNA(Thr) + AMP + diphosphate + H(+). In terms of biological role, catalyzes the attachment of threonine to tRNA(Thr) in a two-step reaction: L-threonine is first activated by ATP to form Thr-AMP and then transferred to the acceptor end of tRNA(Thr). Also edits incorrectly charged L-seryl-tRNA(Thr). This chain is Threonine--tRNA ligase, found in Cupriavidus pinatubonensis (strain JMP 134 / LMG 1197) (Cupriavidus necator (strain JMP 134)).